A 226-amino-acid chain; its full sequence is Large ribosomal subunit protein uL1 (226 aa).

The protein belongs to the universal ribosomal protein uL1 family. In terms of assembly, part of the 50S ribosomal subunit.

In terms of biological role, binds directly to 23S rRNA. The L1 stalk is quite mobile in the ribosome, and is involved in E site tRNA release. Its function is as follows. Protein L1 is also a translational repressor protein, it controls the translation of the L11 operon by binding to its mRNA. The polypeptide is Large ribosomal subunit protein uL1 (Mycoplasma genitalium (strain ATCC 33530 / DSM 19775 / NCTC 10195 / G37) (Mycoplasmoides genitalium)).